The sequence spans 1323 residues: Clustered mitochondria protein homolog (1323 aa).

One copy of the TPR 1 repeat lies at 103 to 141; the sequence is KEKPYNLAAIYDHLNKFREVIGLHFLDKYSSEVGVLSGV. The tract at residues 149 to 186 is disordered; sequence LQDVKETEPETQDDKDKETDETKSTKEDSNQTEEKKSE. Basic and acidic residues predominate over residues 150–186; sequence QDVKETEPETQDDKDKETDETKSTKEDSNQTEEKKSE. One can recognise a Clu domain in the interval 351–608; it reads FANQPDASRS…RATPLDIEFI (258 aa). The stretch at 530–563 is one TPR 2 repeat; the sequence is CYGLSTDGSKIFSDSSFENVLKPIAEAFHLKPHP. Residues 764-801 are compositionally biased toward basic and acidic residues; sequence NEEEISKRKEESEKKATEGKDQDKEEEKANDNEKNKED. The interval 764–808 is disordered; sequence NEEEISKRKEESEKKATEGKDQDKEEEKANDNEKNKEDDKEEVSN. 4 TPR repeats span residues 1042-1076, 1099-1132, 1141-1174, and 1183-1216; these read LSVY…KSEA, ITAY…WTLV, VNTY…STKL, and GMLR…FTKF. The disordered stretch occupies residues 1250–1323; it reads KALAQQASAS…KKSNNKKSKK (74 aa). Over residues 1308–1323 the composition is skewed to basic residues; that stretch reads PKKQLKKKSNNKKSKK.

This sequence belongs to the CLU family. As to quaternary structure, may associate with the eukaryotic translation initiation factor 3 (eIF-3) complex.

It is found in the cytoplasm. Functionally, mRNA-binding protein involved in proper cytoplasmic distribution of mitochondria. The polypeptide is Clustered mitochondria protein homolog (Debaryomyces hansenii (strain ATCC 36239 / CBS 767 / BCRC 21394 / JCM 1990 / NBRC 0083 / IGC 2968) (Yeast)).